A 545-amino-acid polypeptide reads, in one-letter code: Ribulokinase (545 aa).

The protein belongs to the ribulokinase family.

It carries out the reaction D-ribulose + ATP = D-ribulose 5-phosphate + ADP + H(+). The enzyme catalyses L-ribulose + ATP = L-ribulose 5-phosphate + ADP + H(+). Its pathway is carbohydrate degradation; L-arabinose degradation via L-ribulose; D-xylulose 5-phosphate from L-arabinose (bacterial route): step 2/3. This chain is Ribulokinase, found in Staphylococcus aureus (strain bovine RF122 / ET3-1).